The primary structure comprises 65 residues: MPKIKTVRGAAKRFKKTASGGFKRKQSHLRHILTKKTTKRKRHLRHKSMVAKADQVLVVACLPYA.

Positions 1 to 26 (MPKIKTVRGAAKRFKKTASGGFKRKQ) are disordered. The segment covering 10–26 (AAKRFKKTASGGFKRKQ) has biased composition (basic residues).

It belongs to the bacterial ribosomal protein bL35 family.

The protein is Large ribosomal subunit protein bL35 of Actinobacillus pleuropneumoniae serotype 7 (strain AP76).